A 1063-amino-acid chain; its full sequence is Lysine-specific demethylase phf2 (1063 aa).

Residues 5–56 (PVYCICRLPYDVTQFMIECDACKDWFHGSCVGVDEDEAPDIDIYHCPNCEKT) form a PHD-type zinc finger. The JmjC domain occupies 197 to 353 (FSDARMANIV…MQMRAYEVEK (157 aa)). Thr246 contacts 2-oxoglutarate. Positions 249 and 251 each coordinate Fe cation. 2-oxoglutarate is bound by residues Tyr259 and Lys266. A Fe cation-binding site is contributed by Asn321. Disordered regions lie at residues 448–546 (VSDS…LAAL), 704–761 (NIKE…SAGI), 773–864 (GIDY…DMFD), and 879–1045 (YVYP…MATA). Residues 460 to 477 (SEPSNSKPPAEEPPSALS) show a composition bias toward low complexity. Basic and acidic residues-rich tracts occupy residues 513–540 (PPKEPKIKEGGKKKAKKVKEGVIPEKKP) and 723–745 (KSPDTSDEESLHIDTEAKTDVKG). Over residues 746 to 755 (RNSKVSKKKG) the composition is skewed to basic residues. A compositionally biased stretch (polar residues) spans 776 to 791 (YSNNSQPPASPSTQEA). Low complexity predominate over residues 813-833 (SNSQAKNNSHSSAASKKPSGA). The segment covering 842–852 (RPAKRLPKKTQ) has biased composition (basic residues). The segment covering 920–929 (RQERPAREGA) has biased composition (basic and acidic residues). The segment covering 953–964 (IKKKKKSAKKKP) has biased composition (basic residues). Residues 965 to 975 (IVAEESHKLSH) show a composition bias toward basic and acidic residues. Low complexity-rich tracts occupy residues 976 to 988 (DSSSPEPTPDSES) and 1021 to 1031 (SSSSSSQNASS). A Phosphoserine; by PKA modification is found at Ser1021.

The protein belongs to the JHDM1 histone demethylase family. JHDM1D subfamily.

The protein localises to the nucleus. It is found in the nucleolus. It localises to the chromosome. The protein resides in the centromere. Its subcellular location is the kinetochore. Its function is as follows. Lysine demethylase that demethylates both histones and non-histone proteins. Mediates demethylation of dimethylated 'Lys-9' of histone H3 (H3K9me2). Recruited to trimethylated 'Lys-4' of histone H3 (H3K4me3) at rDNA promoters and promotes expression of rDNA. In Danio rerio (Zebrafish), this protein is Lysine-specific demethylase phf2 (phf2).